The chain runs to 150 residues: Heat shock protein beta-3 (150 aa).

One can recognise a sHSP domain in the interval 47–150; it reads KTRAAQSPPV…VEVKDPVGTK (104 aa).

The protein belongs to the small heat shock protein (HSP20) family.

The protein resides in the cytoplasm. The protein localises to the nucleus. Inhibitor of actin polymerization. In Homo sapiens (Human), this protein is Heat shock protein beta-3 (HSPB3).